The sequence spans 89 residues: Large ribosomal subunit protein bL27 (89 aa).

Residues Met1–Lys24 form a disordered region.

It belongs to the bacterial ribosomal protein bL27 family.

The polypeptide is Large ribosomal subunit protein bL27 (Synechococcus sp. (strain WH7803)).